We begin with the raw amino-acid sequence, 337 residues long: Schlafen family member 1 (337 aa).

The segment at 147–166 (AGGRSPSARPSDRPGDDTQE) is disordered. Basic and acidic residues predominate over residues 156–166 (PSDRPGDDTQE).

It belongs to the Schlafen family. As to quaternary structure, interacts with DNAJB6; promoting nuclear translocation and ability to promote cell-cycle arrest. As to expression, mainly expressed in the thymus, lymph node and spleen. Specifically expressed in T-lineage cells, but not in B-cells. Strongly up-regulated during the differentiation from CD4(+)CD8(+) double-positive (DP) to CD4(+) or CD8(+) single-positive (SP) thymocytes. Highly expressed in quiescent single-positive thymocytes and T-cells. The expression substantially decreases after TCR (T-cell receptor)-mediated activation.

It localises to the cytoplasm. The protein resides in the nucleus. Functionally, protein expressed in resting T-cells, which is required for maintaining T-cells in the quiescent state. Acts by promoting cell-cycle arrest of T-cells through inhibiting the expression of cyclin-D1 (CCND1). The protein is Schlafen family member 1 of Mus musculus (Mouse).